A 652-amino-acid polypeptide reads, in one-letter code: Acetyl-coenzyme A synthetase (652 aa).

CoA contacts are provided by residues R191–R194, T311, and N335. Residues G387 to P389, D411 to T416, D500, and R515 each bind ATP. Position 523 (S523) interacts with CoA. Position 526 (R526) interacts with ATP. The Mg(2+) site is built by V537, H539, and I542. Residue R584 coordinates CoA. K609 bears the N6-acetyllysine mark.

It belongs to the ATP-dependent AMP-binding enzyme family. The cofactor is Mg(2+). Post-translationally, acetylated. Deacetylation by the SIR2-homolog deacetylase activates the enzyme.

The catalysed reaction is acetate + ATP + CoA = acetyl-CoA + AMP + diphosphate. Functionally, catalyzes the conversion of acetate into acetyl-CoA (AcCoA), an essential intermediate at the junction of anabolic and catabolic pathways. Acs undergoes a two-step reaction. In the first half reaction, Acs combines acetate with ATP to form acetyl-adenylate (AcAMP) intermediate. In the second half reaction, it can then transfer the acetyl group from AcAMP to the sulfhydryl group of CoA, forming the product AcCoA. In terms of biological role, enables the cell to use acetate during aerobic growth to generate energy via the TCA cycle, and biosynthetic compounds via the glyoxylate shunt. Acetylates CheY, the response regulator involved in flagellar movement and chemotaxis. The polypeptide is Acetyl-coenzyme A synthetase (Yersinia pseudotuberculosis serotype I (strain IP32953)).